Reading from the N-terminus, the 183-residue chain is GTP cyclohydrolase 1 (183 aa).

The Zn(2+) site is built by Cys-71, His-74, and Cys-142.

The protein belongs to the GTP cyclohydrolase I family. Toroid-shaped homodecamer, composed of two pentamers of five dimers.

The catalysed reaction is GTP + H2O = 7,8-dihydroneopterin 3'-triphosphate + formate + H(+). It participates in cofactor biosynthesis; 7,8-dihydroneopterin triphosphate biosynthesis; 7,8-dihydroneopterin triphosphate from GTP: step 1/1. The protein is GTP cyclohydrolase 1 of Leptospira borgpetersenii serovar Hardjo-bovis (strain JB197).